A 280-amino-acid chain; its full sequence is Undecaprenyl-diphosphatase (280 aa).

Transmembrane regions (helical) follow at residues 19–39 (FLPV…PFSG), 44–64 (FDDL…LFLY), 89–109 (FYFL…GFIA), 125–145 (ILAS…WFFQ), 156–176 (VGFR…IPGV), 197–217 (AEFS…YKLI), 226–246 (VTIP…TLVI), and 259–279 (GVFG…TKFI).

The protein belongs to the UppP family.

The protein localises to the cell inner membrane. The catalysed reaction is di-trans,octa-cis-undecaprenyl diphosphate + H2O = di-trans,octa-cis-undecaprenyl phosphate + phosphate + H(+). Functionally, catalyzes the dephosphorylation of undecaprenyl diphosphate (UPP). Confers resistance to bacitracin. This Leptospira borgpetersenii serovar Hardjo-bovis (strain L550) protein is Undecaprenyl-diphosphatase.